We begin with the raw amino-acid sequence, 198 residues long: uncharacterized protein (198 aa).

Helical transmembrane passes span 20-40 (VIVG…GLWA), 70-90 (FFVA…TASV), 107-127 (LAIG…LLVW), and 164-184 (VAAT…VLAA).

The protein to M.tuberculosis Rv1591.

The protein resides in the cell membrane. This is an uncharacterized protein from Mycobacterium leprae (strain TN).